The primary structure comprises 321 residues: Phospho-N-acetylmuramoyl-pentapeptide-transferase (321 aa).

Transmembrane regions (helical) follow at residues 1-21, 50-70, 76-96, 112-132, 140-160, 176-196, 200-220, 225-245, 250-270, and 300-320; these read MIFI…PILI, MGGL…IIFV, IILL…DDYI, FLAQ…FHLV, IPFV…IVFW, GLAT…SYML, AIGI…PYNL, VFMG…ISIM, LSLI…MLQV, and VVTV…WIGV.

It belongs to the glycosyltransferase 4 family. MraY subfamily. Mg(2+) serves as cofactor.

The protein resides in the cell membrane. It carries out the reaction UDP-N-acetyl-alpha-D-muramoyl-L-alanyl-gamma-D-glutamyl-L-lysyl-D-alanyl-D-alanine + di-trans,octa-cis-undecaprenyl phosphate = Mur2Ac(oyl-L-Ala-gamma-D-Glu-L-Lys-D-Ala-D-Ala)-di-trans,octa-cis-undecaprenyl diphosphate + UMP. It participates in cell wall biogenesis; peptidoglycan biosynthesis. Its function is as follows. Catalyzes the initial step of the lipid cycle reactions in the biosynthesis of the cell wall peptidoglycan: transfers peptidoglycan precursor phospho-MurNAc-pentapeptide from UDP-MurNAc-pentapeptide onto the lipid carrier undecaprenyl phosphate, yielding undecaprenyl-pyrophosphoryl-MurNAc-pentapeptide, known as lipid I. This Staphylococcus epidermidis (strain ATCC 12228 / FDA PCI 1200) protein is Phospho-N-acetylmuramoyl-pentapeptide-transferase.